Consider the following 347-residue polypeptide: S-adenosylmethionine:tRNA ribosyltransferase-isomerase (347 aa).

The protein belongs to the QueA family. As to quaternary structure, monomer.

It is found in the cytoplasm. The enzyme catalyses 7-aminomethyl-7-carbaguanosine(34) in tRNA + S-adenosyl-L-methionine = epoxyqueuosine(34) in tRNA + adenine + L-methionine + 2 H(+). It functions in the pathway tRNA modification; tRNA-queuosine biosynthesis. In terms of biological role, transfers and isomerizes the ribose moiety from AdoMet to the 7-aminomethyl group of 7-deazaguanine (preQ1-tRNA) to give epoxyqueuosine (oQ-tRNA). This is S-adenosylmethionine:tRNA ribosyltransferase-isomerase from Ectopseudomonas mendocina (strain ymp) (Pseudomonas mendocina).